The chain runs to 117 residues: Large ribosomal subunit protein eL34 (117 aa).

Position 12 is a phosphoserine (Ser-12). An N6-acetyllysine mark is found at Lys-36 and Lys-43. Residue Lys-108 forms a Glycyl lysine isopeptide (Lys-Gly) (interchain with G-Cter in SUMO2) linkage.

Belongs to the eukaryotic ribosomal protein eL34 family. As to quaternary structure, component of the large ribosomal subunit.

It localises to the cytoplasm. The protein resides in the cytosol. The protein localises to the endoplasmic reticulum. In terms of biological role, component of the large ribosomal subunit. The ribosome is a large ribonucleoprotein complex responsible for the synthesis of proteins in the cell. This Rattus norvegicus (Rat) protein is Large ribosomal subunit protein eL34 (Rpl34).